Consider the following 86-residue polypeptide: UPF0386 protein RC1_1783 (86 aa).

Belongs to the UPF0386 family.

The protein is UPF0386 protein RC1_1783 of Rhodospirillum centenum (strain ATCC 51521 / SW).